The primary structure comprises 341 residues: MRVLGIESSCDETGVAVYDTGLSGSAALRAHAVYSQIALHAEYGGVVPELASRDHVRKLLPLVRQTLAEAGLGVGDIDGVAYTAGPGLVGALLVGAGVARSLAWALEVPAVGVHHMEGHLLAPLMEDDPPEAPFVALLVSGGHTQLVAVDAIGQYRLLGETLDDAAGEAFDKTAKLMGLPYPGGPQLARLAEQGTPGAYRFARPMTDRPGLDFSFSGLKTQVLMAWRDSDQSEQTRADIARGFEDAVVETLSIKCERALEAAGTNVIVVAGGVGANKRLRARLQQMAERLGGRACFPRPALCTDNGAMIAFAGALRLQAGQYSPPKVDVTPRWDMATLPAV.

The Fe cation site is built by H115 and H119. Substrate contacts are provided by residues 138–142 (LVSGG), D171, G184, and N276. A Fe cation-binding site is contributed by D304.

Belongs to the KAE1 / TsaD family. Fe(2+) serves as cofactor.

The protein localises to the cytoplasm. It catalyses the reaction L-threonylcarbamoyladenylate + adenosine(37) in tRNA = N(6)-L-threonylcarbamoyladenosine(37) in tRNA + AMP + H(+). In terms of biological role, required for the formation of a threonylcarbamoyl group on adenosine at position 37 (t(6)A37) in tRNAs that read codons beginning with adenine. Is involved in the transfer of the threonylcarbamoyl moiety of threonylcarbamoyl-AMP (TC-AMP) to the N6 group of A37, together with TsaE and TsaB. TsaD likely plays a direct catalytic role in this reaction. This chain is tRNA N6-adenosine threonylcarbamoyltransferase, found in Stenotrophomonas maltophilia (strain K279a).